Consider the following 275-residue polypeptide: Large ribosomal subunit protein uL2c (275 aa).

The segment at 224–275 (AMNPVDHPHGGGEGRTPIGRKKPVTPWGYSALGKKSRKRNRYSDASILRRRE) is disordered.

Belongs to the universal ribosomal protein uL2 family. Part of the 50S ribosomal subunit.

It is found in the plastid. The protein resides in the chloroplast. The chain is Large ribosomal subunit protein uL2c (rpl2) from Picea abies (Norway spruce).